Consider the following 280-residue polypeptide: MSNLLVFDNSVVTDEALVANIMAQNQGASHQLLERIGTQVQLPANTYASIQVFTKSPQPVTLPASLLETLSGALAPGGALFGAVDGSQVMDFIMAGLAQDGDKWVKPAATGTTLLKKSGGGPKKFAFKRASPATAAPSTNGTNPAATVNLNSVVTLSMDDDDLMDEDDLMEDDTNLSMPIKIPAKCDPGPGKKRRKACKDCTCGLKEMEEQAKDAQLAAQNTVTLSAEDTAEIDFTVQGKTGGCGSCALGDAFRCDGCPYLGLPPFKPGEAVSIGGASDL.

The interval 1 to 121 is N-terminal SAM-like domain; it reads MSNLLVFDNS…TTLLKKSGGG (121 aa). The tract at residues 122-176 is linker; sequence PKKFAFKRASPATAAPSTNGTNPAATVNLNSVVTLSMDDDDLMDEDDLMEDDTNL. Residues C186, C198, C201, and C203 each contribute to the [2Fe-2S] cluster site. The tract at residues 186 to 203 is fe-S binding site A; it reads CDPGPGKKRRKACKDCTC. [4Fe-4S] cluster contacts are provided by C244, C247, C255, and C258. 2 short sequence motifs (cx2C motif) span residues 244-247 and 255-258; these read CGSC and CDGC. The segment at 244–258 is fe-S binding site B; sequence CGSCALGDAFRCDGC.

Belongs to the anamorsin family. Monomer. Interacts with TAH18. Interacts with MIA40. [2Fe-2S] cluster serves as cofactor. It depends on [4Fe-4S] cluster as a cofactor.

The protein resides in the cytoplasm. The protein localises to the mitochondrion intermembrane space. Functionally, component of the cytosolic iron-sulfur (Fe-S) protein assembly (CIA) machinery required for the maturation of extramitochondrial Fe-S proteins. Part of an electron transfer chain functioning in an early step of cytosolic Fe-S biogenesis, facilitating the de novo assembly of a [4Fe-4S] cluster on the scaffold complex CFD1-NBP35. Electrons are transferred to DRE2 from NADPH via the FAD- and FMN-containing protein TAH18. TAH18-DRE2 are also required for the assembly of the diferric tyrosyl radical cofactor of ribonucleotide reductase (RNR), probably by providing electrons for reduction during radical cofactor maturation in the catalytic small subunit RNR2. In Yarrowia lipolytica (strain CLIB 122 / E 150) (Yeast), this protein is Fe-S cluster assembly protein DRE2.